A 557-amino-acid polypeptide reads, in one-letter code: Dihydroxy-acid dehydratase (557 aa).

Mg(2+) is bound at residue Asp78. Cys119 is a binding site for [2Fe-2S] cluster. Residues Asp120 and Lys121 each contribute to the Mg(2+) site. Lys121 bears the N6-carboxylysine mark. A [2Fe-2S] cluster-binding site is contributed by Cys192. Glu442 contacts Mg(2+). The Proton acceptor role is filled by Ser468.

The protein belongs to the IlvD/Edd family. As to quaternary structure, homodimer. The cofactor is [2Fe-2S] cluster. Mg(2+) serves as cofactor.

It catalyses the reaction (2R)-2,3-dihydroxy-3-methylbutanoate = 3-methyl-2-oxobutanoate + H2O. The enzyme catalyses (2R,3R)-2,3-dihydroxy-3-methylpentanoate = (S)-3-methyl-2-oxopentanoate + H2O. It functions in the pathway amino-acid biosynthesis; L-isoleucine biosynthesis; L-isoleucine from 2-oxobutanoate: step 3/4. The protein operates within amino-acid biosynthesis; L-valine biosynthesis; L-valine from pyruvate: step 3/4. Functions in the biosynthesis of branched-chain amino acids. Catalyzes the dehydration of (2R,3R)-2,3-dihydroxy-3-methylpentanoate (2,3-dihydroxy-3-methylvalerate) into 2-oxo-3-methylpentanoate (2-oxo-3-methylvalerate) and of (2R)-2,3-dihydroxy-3-methylbutanoate (2,3-dihydroxyisovalerate) into 2-oxo-3-methylbutanoate (2-oxoisovalerate), the penultimate precursor to L-isoleucine and L-valine, respectively. The sequence is that of Dihydroxy-acid dehydratase from Bacillus cereus (strain 03BB102).